We begin with the raw amino-acid sequence, 84 residues long: CDC42 small effector protein 2 (84 aa).

Residues C10 and C11 are each lipidated (S-palmitoyl cysteine). Positions 29-42 (IGEPTNFAHTAHVG) constitute a CRIB domain. A phosphoserine mark is found at S43 and S52.

Belongs to the CDC42SE/SPEC family. Interacts with CDC42 (in GTP-bound form). Interacts weakly with RAC1 and not at all with RHOA.

It localises to the cytoplasm. The protein resides in the cytoskeleton. The protein localises to the cell membrane. Its subcellular location is the cell projection. It is found in the phagocytic cup. Probably involved in the organization of the actin cytoskeleton by acting downstream of CDC42, inducing actin filament assembly. Alters CDC42-induced cell shape changes. In activated T-cells, may play a role in CDC42-mediated F-actin accumulation at the immunological synapse. May play a role in early contractile events in phagocytosis in macrophages. The protein is CDC42 small effector protein 2 (CDC42SE2) of Pongo abelii (Sumatran orangutan).